The sequence spans 156 residues: MPRRREVPKREVLPDPKFASQDVSKFINVIMQSGKKSVAERIVYGAFDHITAKASKDPLEVFAAAVANVKPVVEVKSRRVGGANYQVPVEVRPSRRMALSMRWLREAARKRAEKSMAQRLAGELLEAAEGRGAAMKKREEVHRMAEANKAFSHYRF.

Belongs to the universal ribosomal protein uS7 family. As to quaternary structure, part of the 30S ribosomal subunit. Contacts proteins S9 and S11.

Functionally, one of the primary rRNA binding proteins, it binds directly to 16S rRNA where it nucleates assembly of the head domain of the 30S subunit. Is located at the subunit interface close to the decoding center, probably blocks exit of the E-site tRNA. The protein is Small ribosomal subunit protein uS7 of Azoarcus sp. (strain BH72).